The chain runs to 819 residues: Myosin light chain kinase 3 (819 aa).

The tract at residues valine 146 to glutamine 460 is disordered. At serine 152 the chain carries Phosphoserine. Composition is skewed to basic and acidic residues over residues glutamate 158–lysine 170 and aspartate 183–valine 196. Pro residues predominate over residues glycine 307–leucine 318. Residues serine 355, serine 401, and serine 408 each carry the phosphoserine modification. The region spanning valine 515–leucine 770 is the Protein kinase domain. ATP contacts are provided by residues leucine 521–valine 529 and lysine 544. Aspartate 636 functions as the Proton acceptor in the catalytic mechanism.

It belongs to the protein kinase superfamily. CAMK Ser/Thr protein kinase family. The cofactor is Mg(2+). Phosphorylated on serine residues.

It is found in the cytoplasm. It catalyses the reaction L-seryl-[myosin light chain] + ATP = O-phospho-L-seryl-[myosin light chain] + ADP + H(+). It carries out the reaction L-threonyl-[myosin light chain] + ATP = O-phospho-L-threonyl-[myosin light chain] + ADP + H(+). In terms of biological role, kinase that phosphorylates MYL2 in vitro. Promotes sarcomere formation in cardiomyocytes and increases cardiomyocyte contractility. This Pongo abelii (Sumatran orangutan) protein is Myosin light chain kinase 3 (MYLK3).